Consider the following 146-residue polypeptide: 3-dehydroquinate dehydratase (146 aa).

Tyrosine 22 serves as the catalytic Proton acceptor. Asparagine 73, histidine 79, and aspartate 86 together coordinate substrate. Catalysis depends on histidine 99, which acts as the Proton donor. Substrate-binding positions include isoleucine 100–serine 101 and arginine 110.

The protein belongs to the type-II 3-dehydroquinase family. In terms of assembly, homododecamer.

It catalyses the reaction 3-dehydroquinate = 3-dehydroshikimate + H2O. It functions in the pathway metabolic intermediate biosynthesis; chorismate biosynthesis; chorismate from D-erythrose 4-phosphate and phosphoenolpyruvate: step 3/7. Functionally, catalyzes a trans-dehydration via an enolate intermediate. The polypeptide is 3-dehydroquinate dehydratase (Prochlorococcus marinus subsp. pastoris (strain CCMP1986 / NIES-2087 / MED4)).